The primary structure comprises 172 residues: Zinc finger protein 580 (172 aa).

The interval methionine 1 to tyrosine 92 is disordered. Residues methionine 19–proline 30 show a composition bias toward pro residues. Residue lysine 31 forms a Glycyl lysine isopeptide (Lys-Gly) (interchain with G-Cter in SUMO2) linkage. The segment at tyrosine 92–histidine 114 adopts a C2H2-type 1 zinc-finger fold. Lysine 118 is covalently cross-linked (Glycyl lysine isopeptide (Lys-Gly) (interchain with G-Cter in SUMO2)). 2 C2H2-type zinc fingers span residues phenylalanine 120 to histidine 142 and histidine 150 to histidine 172.

As to quaternary structure, interacts with SMAD2.

The protein resides in the nucleus. Its function is as follows. Involved in the regulation of endothelial cell proliferation and migration. Mediates H(2)O(2)-induced leukocyte chemotaxis by elevating interleukin-8 production and may play a role in inflammation. May be involved in transcriptional regulation. The protein is Zinc finger protein 580 (Znf580) of Mus musculus (Mouse).